A 207-amino-acid polypeptide reads, in one-letter code: Outer-membrane lipoprotein LolB (207 aa).

A signal peptide spans 1–21; it reads MPTNTVRCLRLLPLASVLLAA. Cys-22 is lipidated: N-palmitoyl cysteine. Cys-22 is lipidated: S-diacylglycerol cysteine.

The protein belongs to the LolB family. As to quaternary structure, monomer.

It localises to the cell outer membrane. Its function is as follows. Plays a critical role in the incorporation of lipoproteins in the outer membrane after they are released by the LolA protein. The polypeptide is Outer-membrane lipoprotein LolB (Pectobacterium carotovorum subsp. carotovorum (strain PC1)).